The primary structure comprises 274 residues: Shikimate dehydrogenase (NADP(+)) (274 aa).

Shikimate-binding positions include 14-16 (SKS) and Thr61. The Proton acceptor role is filled by Lys65. Glu77 serves as a coordination point for NADP(+). Shikimate contacts are provided by Asn86 and Asp102. NADP(+) is bound by residues 126 to 130 (GAGGA), 149 to 154 (NRTLEK), and Met212. Tyr214 is a binding site for shikimate. Gly237 lines the NADP(+) pocket.

Belongs to the shikimate dehydrogenase family. In terms of assembly, homodimer.

It catalyses the reaction shikimate + NADP(+) = 3-dehydroshikimate + NADPH + H(+). It participates in metabolic intermediate biosynthesis; chorismate biosynthesis; chorismate from D-erythrose 4-phosphate and phosphoenolpyruvate: step 4/7. Involved in the biosynthesis of the chorismate, which leads to the biosynthesis of aromatic amino acids. Catalyzes the reversible NADPH linked reduction of 3-dehydroshikimate (DHSA) to yield shikimate (SA). The polypeptide is Shikimate dehydrogenase (NADP(+)) (Actinobacillus pleuropneumoniae serotype 5b (strain L20)).